We begin with the raw amino-acid sequence, 308 residues long: Barttin (308 aa).

Residues 1 to 5 are Cytoplasmic-facing; it reads MADEK. The segment at 1–72 is regulates channel membrane trafficking and anion conductance; sequence MADEKTFRIG…VPADSDFQGM (72 aa). A helical transmembrane segment spans residues 6–26; the sequence is TFRIGFIVLGLFLLSLGTFLM. The Extracellular portion of the chain corresponds to 27–32; it reads SHDRPQ. A helical membrane pass occupies residues 33–53; it reads VYGTFYAMGSIMVIGGVLWSM. Residues C54 and C56 are each lipidated (S-palmitoyl cysteine). Residues 54-308 lie on the Cytoplasmic side of the membrane; the sequence is CQCYPKITFV…ELGFEPDVQG (255 aa). Phosphoserine is present on residues S79 and S107. Disordered stretches follow at residues 127–149 and 162–308; these read PLLAPELKTGTSSAKEGEPHSAQ and LDEK…DVQG. Residues 162-171 show a composition bias toward basic and acidic residues; sequence LDEKEGEKSR. Residues 172–183 are compositionally biased toward polar residues; sequence SQSSPPACSQGS. Positions 274-283 are enriched in acidic residues; that stretch reads EEPEQEEEDL. At S290 the chain carries Phosphoserine.

In terms of assembly, interacts with CLCNK channels. Forms heteromers with CLCNKA in the thin ascending limb of Henle and with CLCNKB in the thick ascending limb and more distal segments. In terms of processing, palmitoylation is necessary for activation of plasma membrane-inserted CLC-K/barttin channels. Expressed along the distal nephron.

It localises to the basolateral cell membrane. Regulatory subunit of anion-selective CLCNKA:BSND and CLCNKB:BSND heteromeric channels involved in basolateral chloride conductance along the nephron to achieve urine concentration and maintain systemic acid-base homeostasis, and in the stria vascularis of the inner ear to establish the endocochlear potential necessary for normal hearing. Most likely acts as a chaperone that allosterically regulates proper sorting of CLCNKA:BSND and CLCNKB:BSND channels at the basolateral plasma membrane domain and functional switch to ion conducting state. Mediates constitutive opening of channel common gates. The chain is Barttin from Rattus norvegicus (Rat).